The primary structure comprises 461 residues: Probable tubulin polyglutamylase TTLL9 (461 aa).

The span at methionine 1 to lysine 10 shows a compositional bias: polar residues. The segment at methionine 1–arginine 20 is disordered. The 381-residue stretch at glutamine 22–arginine 402 folds into the TTL domain. ATP is bound by residues lysine 149 and glutamine 155–glycine 156. An a protein-binding site is contributed by glutamine 155. Positions glutamine 186–serine 197 are enriched in polar residues. A disordered region spans residues glutamine 186–aspartate 208. Over residues histidine 198–aspartate 208 the composition is skewed to basic and acidic residues. Residues glutamine 218 to valine 221 and lysine 231 to aspartate 233 each bind ATP. Arginine 257 contributes to the L-glutamate binding site. Residue threonine 276–asparagine 277 coordinates ATP. Lysine 294 lines the L-glutamate pocket. 3 residues coordinate Mg(2+): aspartate 348, glutamate 361, and asparagine 363. Lysine 379 contacts L-glutamate.

This sequence belongs to the tubulin--tyrosine ligase family. Requires Mg(2+) as cofactor.

It is found in the cytoplasm. The protein resides in the cytoskeleton. Its subcellular location is the cilium basal body. The protein localises to the flagellum axoneme. The enzyme catalyses (L-glutamyl)(n)-gamma-L-glutamyl-L-glutamyl-[protein] + L-glutamate + ATP = (L-glutamyl)(n+1)-gamma-L-glutamyl-L-glutamyl-[protein] + ADP + phosphate + H(+). Its function is as follows. Probable tubulin polyglutamylase that generates side chains of glutamate on the gamma-carboxyl group of specific glutamate residues within the C-terminal tail of target proteins. Similar to TTLL1, may acquire enzymatic activity only in complex with other proteins as it is most likely lacking domains important for autonomous activity. Mediates tubulin polyglutamylation which induces establishment of microtubule heterogeneity in sperm flagella, thereby playing a role in normal motile flagella axoneme structure and sperm flagella beating pattern. The polypeptide is Probable tubulin polyglutamylase TTLL9 (Ttll9) (Rattus norvegicus (Rat)).